A 237-amino-acid polypeptide reads, in one-letter code: Large ribosomal subunit protein uL1 (237 aa).

This sequence belongs to the universal ribosomal protein uL1 family. In terms of assembly, part of the 50S ribosomal subunit.

Binds directly to 23S rRNA. The L1 stalk is quite mobile in the ribosome, and is involved in E site tRNA release. Its function is as follows. Protein L1 is also a translational repressor protein, it controls the translation of the L11 operon by binding to its mRNA. In Nocardia farcinica (strain IFM 10152), this protein is Large ribosomal subunit protein uL1.